A 208-amino-acid chain; its full sequence is Small ribosomal subunit protein uS4 (208 aa).

Residues 30–51 form a disordered region; the sequence is KSSLEKRPYAPGQHGQRRSKIS. The S4 RNA-binding domain maps to 98–161; that stretch reads RRLDNVVYRM…KNNPQVQRSI (64 aa).

The protein belongs to the universal ribosomal protein uS4 family. As to quaternary structure, part of the 30S ribosomal subunit. Contacts protein S5. The interaction surface between S4 and S5 is involved in control of translational fidelity.

Functionally, one of the primary rRNA binding proteins, it binds directly to 16S rRNA where it nucleates assembly of the body of the 30S subunit. Its function is as follows. With S5 and S12 plays an important role in translational accuracy. The chain is Small ribosomal subunit protein uS4 from Wolinella succinogenes (strain ATCC 29543 / DSM 1740 / CCUG 13145 / JCM 31913 / LMG 7466 / NCTC 11488 / FDC 602W) (Vibrio succinogenes).